We begin with the raw amino-acid sequence, 132 residues long: Agouti-signaling protein (132 aa).

The first 22 residues, 1-22 (MDVTXLLLATLLVFLCCFAAYS), serve as a signal peptide directing secretion. Asparagine 39 carries N-linked (GlcNAc...) asparagine glycosylation. Positions 62–93 (ISRKEAENKRSSKKEASKQKVARPRTPLSVPC) are disordered. Residues 64–79 (RKEAENKRSSKKEASK) show a composition bias toward basic and acidic residues. Cystine bridges form between cysteine 93/cysteine 108, cysteine 100/cysteine 114, cysteine 107/cysteine 125, cysteine 111/cysteine 132, and cysteine 116/cysteine 123. An Agouti domain is found at 93-132 (CVSTRGSCKPPAPACCHPCASCQCRFFRSACSCRVINVNC).

It is found in the secreted. Involved in the regulation of melanogenesis. The binding of ASP to MC1R precludes alpha-MSH initiated signaling and thus blocks production of cAMP, leading to a down-regulation of eumelanogenesis (brown/black pigment) and thus increasing synthesis of pheomelanin (yellow/red pigment). The chain is Agouti-signaling protein (ASIP) from Leontopithecus chrysomelas (Golden-headed lion tamarin).